Here is a 274-residue protein sequence, read N- to C-terminus: Diaminopimelate epimerase (274 aa).

Residues asparagine 11, glutamine 44, and asparagine 64 each contribute to the substrate site. The Proton donor role is filled by cysteine 73. Residues glycine 74–asparagine 75, asparagine 157, asparagine 190, and glutamate 208–arginine 209 contribute to the substrate site. Catalysis depends on cysteine 217, which acts as the Proton acceptor. Glycine 218–serine 219 lines the substrate pocket.

The protein belongs to the diaminopimelate epimerase family. Homodimer.

The protein resides in the cytoplasm. The enzyme catalyses (2S,6S)-2,6-diaminopimelate = meso-2,6-diaminopimelate. Its pathway is amino-acid biosynthesis; L-lysine biosynthesis via DAP pathway; DL-2,6-diaminopimelate from LL-2,6-diaminopimelate: step 1/1. Catalyzes the stereoinversion of LL-2,6-diaminopimelate (L,L-DAP) to meso-diaminopimelate (meso-DAP), a precursor of L-lysine and an essential component of the bacterial peptidoglycan. This chain is Diaminopimelate epimerase, found in Haemophilus ducreyi (strain 35000HP / ATCC 700724).